Consider the following 35-residue polypeptide: Conotoxin Cal6.1c (35 aa).

Positions 1–35 (GLNRPSKRCLAGSAPCEFHKRSTCCSGHCIIWWCA) are excised as a propeptide. 3 cysteine pairs are disulfide-bonded: cysteine 9–cysteine 25, cysteine 16–cysteine 29, and cysteine 24–cysteine 34.

This sequence belongs to the conotoxin O1 superfamily. In terms of tissue distribution, expressed by the venom duct.

The protein resides in the secreted. Functionally, probable neurotoxin with unknown target. Possibly targets ion channels. This is Conotoxin Cal6.1c from Californiconus californicus (California cone).